We begin with the raw amino-acid sequence, 198 residues long: Recombination protein RecR (198 aa).

The C4-type zinc-finger motif lies at 57–72; that stretch reads CSICGRLTDDDPCSIC. The 96-residue stretch at 80-175 folds into the Toprim domain; sequence TTILVLEDSR…KVTRLARGLA (96 aa).

This sequence belongs to the RecR family.

Its function is as follows. May play a role in DNA repair. It seems to be involved in an RecBC-independent recombinational process of DNA repair. It may act with RecF and RecO. The polypeptide is Recombination protein RecR (Streptococcus pneumoniae (strain 70585)).